A 113-amino-acid polypeptide reads, in one-letter code: Iron-sulfur cluster insertion protein ErpA (113 aa).

Residues Cys41, Cys105, and Cys107 each coordinate iron-sulfur cluster.

The protein belongs to the HesB/IscA family. In terms of assembly, homodimer. It depends on iron-sulfur cluster as a cofactor.

Functionally, required for insertion of 4Fe-4S clusters for at least IspG. This Colwellia psychrerythraea (strain 34H / ATCC BAA-681) (Vibrio psychroerythus) protein is Iron-sulfur cluster insertion protein ErpA.